The following is a 259-amino-acid chain: 3-deoxy-manno-octulosonate cytidylyltransferase (259 aa).

Belongs to the KdsB family.

It is found in the cytoplasm. It carries out the reaction 3-deoxy-alpha-D-manno-oct-2-ulosonate + CTP = CMP-3-deoxy-beta-D-manno-octulosonate + diphosphate. It participates in nucleotide-sugar biosynthesis; CMP-3-deoxy-D-manno-octulosonate biosynthesis; CMP-3-deoxy-D-manno-octulosonate from 3-deoxy-D-manno-octulosonate and CTP: step 1/1. It functions in the pathway bacterial outer membrane biogenesis; lipopolysaccharide biosynthesis. Its function is as follows. Activates KDO (a required 8-carbon sugar) for incorporation into bacterial lipopolysaccharide in Gram-negative bacteria. The polypeptide is 3-deoxy-manno-octulosonate cytidylyltransferase (Maricaulis maris (strain MCS10) (Caulobacter maris)).